The primary structure comprises 258 residues: Thiazole synthase (258 aa).

Lysine 98 acts as the Schiff-base intermediate with DXP in catalysis. Residues glycine 159, 185–186 (AG), and 207–208 (NT) each bind 1-deoxy-D-xylulose 5-phosphate.

It belongs to the ThiG family. Homotetramer. Forms heterodimers with either ThiH or ThiS.

It localises to the cytoplasm. It carries out the reaction [ThiS sulfur-carrier protein]-C-terminal-Gly-aminoethanethioate + 2-iminoacetate + 1-deoxy-D-xylulose 5-phosphate = [ThiS sulfur-carrier protein]-C-terminal Gly-Gly + 2-[(2R,5Z)-2-carboxy-4-methylthiazol-5(2H)-ylidene]ethyl phosphate + 2 H2O + H(+). Its pathway is cofactor biosynthesis; thiamine diphosphate biosynthesis. In terms of biological role, catalyzes the rearrangement of 1-deoxy-D-xylulose 5-phosphate (DXP) to produce the thiazole phosphate moiety of thiamine. Sulfur is provided by the thiocarboxylate moiety of the carrier protein ThiS. In vitro, sulfur can be provided by H(2)S. The polypeptide is Thiazole synthase (Bacillus thuringiensis subsp. konkukian (strain 97-27)).